A 500-amino-acid polypeptide reads, in one-letter code: MTTSKCPVTHLTMNNGAPVADNQNSLTAGTRGPLLTQDLWLNEKLADFVREVIPERRMHAKGSGAFGTFTVTRDITKYTRAKIFSEVGKKTEMFGRLATVAGERGADAYTRVRGFALKFYTEEGNWDVVGNNTPVFYPDLRKFPDLNKAVKRSAHQYSSATNNWDFWALLPEALHQVTIVMSDRGIPASYRHMHGFGSHTYSLWNEAGERFWVKFHFRSQQGIKNLTNEEAAKIIADDRESHQRDLYEAIERGEFPKWTMYIQVMPEADAAKVPYHPFDLTKVWPKKDYPLIEVAEFELNRNPENFFADVEQSAFAPSNLVPGIGASPDKMLQARLFNYADAQRYRLGVNFRQIPVNRPRCPVHSNQRDGQGRATELRQPAHYEPNSFGQWSQQPDFAEPPLKINGDAAHWDYRQDDDDYFSQPRALFNLMNDAQKQALFDNTAAAMGDAPDFIKYRHIRNCYRCDPAYGEGGSKALGLTVEEPQAARATDPALGQGGLL.

Residues histidine 59 and asparagine 131 contribute to the active site. A heme-binding site is contributed by tyrosine 339.

It belongs to the catalase family. It depends on heme as a cofactor.

The enzyme catalyses 2 H2O2 = O2 + 2 H2O. Its function is as follows. Decomposes hydrogen peroxide into water and oxygen; serves to protect cells from the toxic effects of hydrogen peroxide. The chain is Catalase (katA) from Neisseria gonorrhoeae.